The following is a 424-amino-acid chain: Glutamate-1-semialdehyde 2,1-aminomutase (424 aa).

N6-(pyridoxal phosphate)lysine is present on Lys263.

This sequence belongs to the class-III pyridoxal-phosphate-dependent aminotransferase family. HemL subfamily. Homodimer. The cofactor is pyridoxal 5'-phosphate.

It is found in the cytoplasm. The catalysed reaction is (S)-4-amino-5-oxopentanoate = 5-aminolevulinate. The protein operates within porphyrin-containing compound metabolism; protoporphyrin-IX biosynthesis; 5-aminolevulinate from L-glutamyl-tRNA(Glu): step 2/2. This Campylobacter jejuni subsp. jejuni serotype O:2 (strain ATCC 700819 / NCTC 11168) protein is Glutamate-1-semialdehyde 2,1-aminomutase.